The chain runs to 136 residues: Protein NrdI (136 aa).

This sequence belongs to the NrdI family.

Functionally, probably involved in ribonucleotide reductase function. The sequence is that of Protein NrdI from Salmonella paratyphi A (strain ATCC 9150 / SARB42).